The primary structure comprises 451 residues: MEPEIISRESIKPSSATPLHLKTHKLCLLDQYRHHAYFPIVLYYPFNQEPNISDPTQINHIVSERLQLLKQSLPETLSRFYPFAGKIKDNLSVDCNDEGIYFVEARVKSSLSDYFNQPNFANANYKFIPFDVKELSGSISGLHVAKIQVTTFAYGGLVICACLSHLFGDGITLNSFLKSWVATACKNAEEAERPNNDASSLFPQQEIYPKEATWTEMCKPFYRDGRFVSRRFLFDAKAIANLKDKVASSLVQNPSRVEAVSALLSRCIMTAFKGKFGSHRPILLTHTVNMRRKAKPLMPEYSMGNIVWTANALCTNEEPELDGLVGKLREAIMEINGDFLKSLQGDEGFLNLCEAAKNESALCSSAVERITFSSWCNFGLVDIDFGWGKPIWVSTIGIDGPVPCFSNTIILMDTRLKGEIEAWVYLLEEDMNILELDKELIAFAKMDPSPM.

Active-site proton acceptor residues include His165 and Asp384.

The protein belongs to the plant acyltransferase family. As to quaternary structure, monomer. As to expression, mainly expressed in petioles and, to a lower extent, in roots.

The enzyme catalyses epi-neemfruitin B + acetyl-CoA = 7-acetyl-epi-neemfruitin B + CoA. The protein operates within secondary metabolite biosynthesis; terpenoid biosynthesis. Acetyltransferase involved in the biosynthesis of limonoids triterpene natural products such as azadirachtin, an antifeedant widely used as bioinsecticide, and possessing many medicinal applications including anti-tumoral, anti-malarial, anti-rheumatic, antibacterial, anti-inflammatory, anti-pyretic and diuretic effects. Catalyzes the formation of 7-acetyl-epi-neemfruitin B from epi-neemfruitin B. The polypeptide is Epi-neemfruitin B 7-O-acetyltransferse L7AT (Melia azedarach (Chinaberry tree)).